We begin with the raw amino-acid sequence, 645 residues long: UvrABC system protein C (645 aa).

The GIY-YIG domain maps to T12–V91. A UVR domain is found at A202–L237.

The protein belongs to the UvrC family. As to quaternary structure, interacts with UvrB in an incision complex.

The protein resides in the cytoplasm. Its function is as follows. The UvrABC repair system catalyzes the recognition and processing of DNA lesions. UvrC both incises the 5' and 3' sides of the lesion. The N-terminal half is responsible for the 3' incision and the C-terminal half is responsible for the 5' incision. The polypeptide is UvrABC system protein C (Acidobacterium capsulatum (strain ATCC 51196 / DSM 11244 / BCRC 80197 / JCM 7670 / NBRC 15755 / NCIMB 13165 / 161)).